Here is a 393-residue protein sequence, read N- to C-terminus: MNVSAESGAPRRAGQRHEVGLAQLPPAPPTTVAVIEGLATGTPRRVVNQSDAADRVAELFLDPGQRERIPRVYQKSRITTRRMAVDPLDAKFDVFRREPATIRDRMHLFYEHAVPLAVDVSKRALAGLPYRAAEIGLLVLATSTGFIAPGVDVAIVKELGLSPSISRVVVNFMGCAAAMNALGTATNYVRAHPAMKALVVCIELCSVNAVFADDINDVVIHSLFGDGCAALVIGASQVQEKLEPGKVVVRSSFSQLLDNTEDGIVLGVNHNGITCELSENLPGYIFSGVAPVVTEMLWDNGLQISDIDLWAIHPGGPKIIEQSVRSLGISAELAAQSWDVLARFGNMLSVSLIFVLETMVQQAESAKAISTGVAFAFGPGVTVEGMLFDIIRR.

The interval Met1–Pro26 is disordered. Cys175 (nucleophile) is an active-site residue. Residue His221 participates in substrate binding.

It belongs to the thiolase-like superfamily. Chalcone/stilbene synthases family. As to quaternary structure, homodimer.

The protein operates within lipid metabolism; fatty acid biosynthesis. In terms of biological role, involved in the biosynthesis of tri- and tetraketide alpha-pyrones. Pks18 catalyzes the extension of medium- and long-chain aliphatic acyl-CoA substrates by using malonyl-CoA as an extender molecule to synthesize polyketide products. This Mycobacterium bovis (strain ATCC BAA-935 / AF2122/97) protein is Alpha-pyrone synthesis polyketide synthase-like Pks18 (pks18).